The chain runs to 228 residues: N-acetyltransferase family 8 member 3 (228 aa).

2 helical membrane-spanning segments follow: residues 36-56 and 58-78; these read MLLL…LFLA and GSWL…WLLA. Residues 61–217 enclose the N-acetyltransferase domain; it reads LLVLLSTLTL…RNSPMICLKY (157 aa).

The protein belongs to the camello family.

The protein resides in the nucleus membrane. The protein localises to the cytoplasm. It localises to the perinuclear region. It catalyses the reaction L-lysyl-[protein] + acetyl-CoA = N(6)-acetyl-L-lysyl-[protein] + CoA + H(+). Functionally, has histone acetyltransferase activity in vitro, with specificity for histone H4. The sequence is that of N-acetyltransferase family 8 member 3 from Rattus norvegicus (Rat).